A 417-amino-acid chain; its full sequence is Probable dihydrofolate synthetase (417 aa).

34-37 (GKGS) is an ATP binding site. Ser-58, Glu-123, and His-151 together coordinate Mg(2+). Positions 274 and 289 each coordinate ATP.

It belongs to the folylpolyglutamate synthase family.

The catalysed reaction is 7,8-dihydropteroate + L-glutamate + ATP = 7,8-dihydrofolate + ADP + phosphate + H(+). It participates in cofactor biosynthesis; tetrahydrofolylpolyglutamate biosynthesis. Glutamate-adding enzyme which catalyzes the binding of the first glutamyl side chain to dihydropteroate. Leads to the de nove synthesis of tetrahydrofolate. de novo. The polypeptide is Probable dihydrofolate synthetase (fol3) (Schizosaccharomyces pombe (strain 972 / ATCC 24843) (Fission yeast)).